Reading from the N-terminus, the 566-residue chain is ATP-dependent RNA helicase DBP3 (566 aa).

Positions 1–139 (MSAGKKHARD…TTPNGSAQRN (139 aa)) are disordered. A compositionally biased stretch (basic residues) spans 39–58 (DKKKKDKKDKKERKEKKEKK). Basic and acidic residues predominate over residues 81-91 (SEPKPEKEKKE). Over residues 92-102 (KNNKKDKKDKK) the composition is skewed to basic residues. Residues 127-139 (AATTTPNGSAQRN) show a composition bias toward polar residues. A Q motif motif is present at residues 182-209 (IHFSHLPTSTLTSKKPFASFTAPTPIQA). The region spanning 212–396 (WPFALSGRDV…EGFMIDPVKA (185 aa)) is the Helicase ATP-binding domain. 225 to 232 (AETGSGKT) lines the ATP pocket. Positions 342–345 (DEAD) match the DEAD box motif. The Helicase C-terminal domain occupies 433 to 566 (GKEQRLLELL…TEHDKSHSGS (134 aa)).

It belongs to the DEAD box helicase family. DDX5/DBP2 subfamily.

It is found in the nucleus. It localises to the nucleolus. It catalyses the reaction ATP + H2O = ADP + phosphate + H(+). Functionally, ATP-dependent RNA helicase required for 60S ribosomal subunit synthesis. Involved in efficient pre-rRNA processing, predominantly at site A3, which is necessary for the normal formation of 25S and 5.8S rRNAs. The sequence is that of ATP-dependent RNA helicase DBP3 (DBP3) from Chaetomium globosum (strain ATCC 6205 / CBS 148.51 / DSM 1962 / NBRC 6347 / NRRL 1970) (Soil fungus).